The chain runs to 147 residues: Small nuclear ribonucleoprotein-associated protein B (147 aa).

Residues 1–84 enclose the Sm domain; that stretch reads MGTTKMVSLL…IVSLSVQGPP (84 aa). Disordered regions lie at residues 87 to 106 and 128 to 147; these read DPSM…PAGR and APPP…FRPV.

This sequence belongs to the snRNP SmB/SmN family. As to quaternary structure, belongs to the 40S cdc5-associated complex (or cwf complex), a spliceosome sub-complex reminiscent of a late-stage spliceosome composed of the U2, U5 and U6 snRNAs and at least brr2, cdc5, cwf2/prp3, cwf3/syf1, cwf4/syf3, cwf5/ecm2, spp42/cwf6, cwf7/spf27, cwf8, cwf9, cwf10, cwf11, cwf12, prp45/cwf13, cwf14, cwf15, cwf16, cwf17, cwf18, cwf19, cwf20, cwf21, cwf22, cwf23, cwf24, cwf25, cwf26, cyp7/cwf27, cwf28, cwf29/ist3, lea1, msl1, prp5/cwf1, prp10, prp12/sap130, prp17, prp22, sap61, sap62, sap114, sap145, slu7, smb1, smd1, smd3, smf1, smg1 and syf2.

Its subcellular location is the nucleus. The protein localises to the cytoplasm. In terms of biological role, plays a role in pre-mRNA splicing as a core component of the spliceosomal U1, U2, U4 and U5 small nuclear ribonucleoproteins (snRNPs), the building blocks of the spliceosome. This is Small nuclear ribonucleoprotein-associated protein B (smb1) from Schizosaccharomyces pombe (strain 972 / ATCC 24843) (Fission yeast).